A 152-amino-acid chain; its full sequence is UPF0225 protein Ent638_2310 (152 aa).

The protein belongs to the UPF0225 family.

In Enterobacter sp. (strain 638), this protein is UPF0225 protein Ent638_2310.